Here is a 464-residue protein sequence, read N- to C-terminus: ATP-dependent protease ATPase subunit HslU (464 aa).

ATP is bound by residues Val-19, Gly-61–Glu-66, Asp-278, Glu-342, and Arg-414.

The protein belongs to the ClpX chaperone family. HslU subfamily. In terms of assembly, a double ring-shaped homohexamer of HslV is capped on each side by a ring-shaped HslU homohexamer. The assembly of the HslU/HslV complex is dependent on binding of ATP.

The protein localises to the cytoplasm. Functionally, ATPase subunit of a proteasome-like degradation complex; this subunit has chaperone activity. The binding of ATP and its subsequent hydrolysis by HslU are essential for unfolding of protein substrates subsequently hydrolyzed by HslV. HslU recognizes the N-terminal part of its protein substrates and unfolds these before they are guided to HslV for hydrolysis. This Halalkalibacterium halodurans (strain ATCC BAA-125 / DSM 18197 / FERM 7344 / JCM 9153 / C-125) (Bacillus halodurans) protein is ATP-dependent protease ATPase subunit HslU.